Here is a 541-residue protein sequence, read N- to C-terminus: Chaperonin GroEL 2 (541 aa).

ATP is bound by residues 29-32 (TLGP), 86-90 (DGTTT), Gly-413, 476-478 (NAA), and Asp-492.

This sequence belongs to the chaperonin (HSP60) family. Forms a cylinder of 14 subunits composed of two heptameric rings stacked back-to-back. Interacts with the co-chaperonin GroES.

The protein localises to the secreted. Its subcellular location is the capsule. It is found in the cell surface. The protein resides in the cell wall. It catalyses the reaction ATP + H2O + a folded polypeptide = ADP + phosphate + an unfolded polypeptide.. Together with its co-chaperonin GroES, plays an essential role in assisting protein folding. The GroEL-GroES system forms a nano-cage that allows encapsulation of the non-native substrate proteins and provides a physical environment optimized to promote and accelerate protein folding. The polypeptide is Chaperonin GroEL 2 (Mycolicibacterium gilvum (strain PYR-GCK) (Mycobacterium gilvum (strain PYR-GCK))).